Consider the following 164-residue polypeptide: Disulfide bond formation protein B (164 aa).

Topologically, residues 1-4 are cytoplasmic; the sequence is MRII. Residues 5–21 traverse the membrane as a helical segment; it reads FLLIALICAGLVSYALY. Topologically, residues 22–39 are periplasmic; the sequence is LQLADGLLPCPLCIFQRM. Cysteine 31 and cysteine 34 are joined by a disulfide. The helical transmembrane segment at 40 to 56 threads the bilayer; sequence AYWLVGITALFAFIHHP. Residues 57-62 lie on the Cytoplasmic side of the membrane; sequence QRLGRR. Residues 63-80 traverse the membrane as a helical segment; it reads IYCGLIILFSLAGAIVAG. Topologically, residues 81 to 136 are periplasmic; that stretch reads RQAWLVRFPEAFECGISPEEAFLNELPLARWWPDMFEANGDCTDGTWQFLSLTIPD. A disulfide bridge links cysteine 94 with cysteine 122. A helical membrane pass occupies residues 137–155; that stretch reads WSLLIFLAFSLIAGLLWRS. At 156-164 the chain is on the cytoplasmic side; sequence RSISSSNLK.

Belongs to the DsbB family.

The protein resides in the cell inner membrane. In terms of biological role, required for disulfide bond formation in some periplasmic proteins. Acts by oxidizing the DsbA protein. The sequence is that of Disulfide bond formation protein B from Nitrosomonas europaea (strain ATCC 19718 / CIP 103999 / KCTC 2705 / NBRC 14298).